A 129-amino-acid polypeptide reads, in one-letter code: Small ribosomal subunit protein uS11 (129 aa).

Residues 109 to 129 (VDDTPVPHNGCRPKKKFRKAS) form a disordered region. A compositionally biased stretch (basic residues) spans 119-129 (CRPKKKFRKAS).

This sequence belongs to the universal ribosomal protein uS11 family. As to quaternary structure, part of the 30S ribosomal subunit. Interacts with proteins S7 and S18. Binds to the C-terminus of IF-3; however exactly how IF-3 interacts with the 30S subunit is unclear.

Its function is as follows. Located on the upper part of the platform of the 30S subunit, where it bridges several disparate RNA helices of the 16S rRNA. Forms part of the Shine-Dalgarno cleft in the 70S ribosome. This Thermus thermophilus (strain ATCC BAA-163 / DSM 7039 / HB27) protein is Small ribosomal subunit protein uS11 (rpsK).